Reading from the N-terminus, the 309-residue chain is Protein phosphatase 1 regulatory subunit 42 (309 aa).

LRR repeat units lie at residues 29-50 (KITH…SLCK), 51-72 (NLSV…NYAT), 73-94 (NLTH…RSLK), 95-116 (KLEK…EGLG), 117-138 (ELRE…LFDP), 147-168 (SLCI…ELLE), and 169-190 (NLNQ…EFLL). The region spanning 204–242 (NPVCLKPKYRDRLILVSKSLEFLDGKEIKNIERQFLMNW) is the LRRCT domain.

In terms of assembly, interacts with PPP1CC isoform gamma-2; the interaction is direct. Interacts with actin, dynein, KIF5B, KIFC1 and tubulin. Associates with microtubules. In terms of processing, phosphorylated; in the testis.

Its subcellular location is the cytoplasm. It is found in the cytoskeleton. It localises to the microtubule organizing center. The protein localises to the centrosome. In terms of biological role, regulates phosphatase activity of protein phosphatase 1 (PP1) complexes in the testis. This Homo sapiens (Human) protein is Protein phosphatase 1 regulatory subunit 42.